A 185-amino-acid chain; its full sequence is Elongation factor P (185 aa).

Belongs to the elongation factor P family.

It is found in the cytoplasm. It functions in the pathway protein biosynthesis; polypeptide chain elongation. In terms of biological role, involved in peptide bond synthesis. Stimulates efficient translation and peptide-bond synthesis on native or reconstituted 70S ribosomes in vitro. Probably functions indirectly by altering the affinity of the ribosome for aminoacyl-tRNA, thus increasing their reactivity as acceptors for peptidyl transferase. The protein is Elongation factor P of Synechococcus sp. (strain JA-3-3Ab) (Cyanobacteria bacterium Yellowstone A-Prime).